The chain runs to 1114 residues: Zinc finger E-box-binding homeobox 1 (1114 aa).

Disordered regions lie at residues 1-105 and 142-163; these read MADG…EVGC and APEEDQRQGTPEASGQDENGTP. The segment covering 15 to 30 has biased composition (low complexity); it reads PRRNNVTNYNNVIEAN. Residues 149–160 are compositionally biased toward polar residues; sequence QGTPEASGQDEN. 3 consecutive C2H2-type zinc fingers follow at residues 170–193, 200–222, and 240–262; these read LTCPYCDRGYKRFTSLKEHIKYRH, FSCSLCSYTFAYRTQLDRHMTSH, and FKCTECGKAFKYKHHLKEHLRIH. A C2H2-type 4; atypical zinc finger spans residues 268 to 292; sequence YECPNCKKRFSHSGSYSSHISSKKC. Disordered regions lie at residues 304–326, 491–529, 553–588, and 636–716; these read SGLKTSQCSSPSLSASPGSPARP, NLKKEHSVPTNSCKNEKLPEDLTVKSEKDKNFEGETNDS, KNPPQLPQSSGTEAEKPSSPAPSETGENNLSPGQPP, and QISV…SRNS. The segment covering 309–326 has biased composition (low complexity); that stretch reads SQCSSPSLSASPGSPARP. Positions 504-523 are enriched in basic and acidic residues; that stretch reads KNEKLPEDLTVKSEKDKNFE. 2 stretches are compositionally biased toward polar residues: residues 573–584 and 636–681; these read APSETGENNLSP and QISV…QNPA. A DNA-binding region (homeobox; atypical) is located at residues 581-640; the sequence is NLSPGQPPLKNLLSLLKAYYALNAQPSAEELSKIADSVNLPLDVVKKWFEKMQAGQISVQ. Low complexity predominate over residues 682–716; that stretch reads NTSKSQTSSGGSTQNGSRSSTPSPSPLNLSSSRNS. Positions 767-771 match the CTBP-binding motif motif; that stretch reads PLNLT. Polar residues-rich tracts occupy residues 852-866 and 874-890; these read AVQETPPKQTQANGS and SSEGVSNVEDQNDSDST. The tract at residues 852–898 is disordered; the sequence is AVQETPPKQTQANGSQDERQDTSSEGVSNVEDQNDSDSTPPKKKMRK. C2H2-type zinc fingers lie at residues 904–926 and 932–954; these read YACDLCDKIFQKSSSLLRHKYEH and HECGICKKAFKHKHHLIEHMRLH. The C2H2-type 7; atypical zinc-finger motif lies at 960 to 981; that stretch reads YQCDKCGKRFSHSGSYSQHMNH. The disordered stretch occupies residues 989 to 1114; that stretch reads EAEERDSTEQ…QVSEEKTNKA (126 aa). Residues 1031 to 1047 show a composition bias toward acidic residues; sequence EEEEDSEKEEEEEEEKD. Residues 1048–1062 are compositionally biased toward basic and acidic residues; that stretch reads VEGLQEEKECRKLQD. Acidic residues predominate over residues 1063 to 1078; the sequence is VEEEEEVEEEEEEEEG. A compositionally biased stretch (basic and acidic residues) spans 1079–1089; it reads KTEGNKNDDVV.

This sequence belongs to the delta-EF1/ZFH-1 C2H2-type zinc-finger family. Expression is developmentally regulated with high expression in mesoderm, nervous system and lens.

The protein localises to the nucleus. In terms of biological role, acts as a transcriptional repressor. Positively regulates neuronal differentiation. Represses transcription by binding to the E box-containing promoter. Binds to delta 1-crystallin enhancer core and represses lens-specific transcription. It also binds many other non-lens specific DNA sequences. In Gallus gallus (Chicken), this protein is Zinc finger E-box-binding homeobox 1 (ZEB1).